A 394-amino-acid chain; its full sequence is RNA-binding motif protein, X-linked-like-2 (394 aa).

In terms of domain architecture, RRM spans 8 to 86; the sequence is GKLFIGGLNL…KAIKVAQATK (79 aa). The span at 67–78 shows a compositional bias: basic and acidic residues; that stretch reads RDMNGKSLDGKA. Positions 67–394 are disordered; that stretch reads RDMNGKSLDG…MERGGGRSRY (328 aa). The segment covering 150 to 165 has biased composition (pro residues); the sequence is RGPPPPPRRAGPPPKR. Basic and acidic residues-rich tracts occupy residues 196 to 231 and 239 to 285; these read PRREPPPPRRDPYLGPRDEGYSSRDGYSSRDYREPR and EYTH…REPF. Residues 321–333 are compositionally biased toward low complexity; the sequence is YSGGRDSYSSSYG. 2 stretches are compositionally biased toward basic and acidic residues: residues 334–350 and 383–394; these read RSDRYSRGRDRVGRPDR and GRMERGGGRSRY.

It localises to the nucleus. This Macaca fascicularis (Crab-eating macaque) protein is RNA-binding motif protein, X-linked-like-2 (RBMXL2).